Reading from the N-terminus, the 193-residue chain is Acyl carrier protein phosphodiesterase (193 aa).

The protein belongs to the AcpH family.

It catalyses the reaction holo-[ACP] + H2O = apo-[ACP] + (R)-4'-phosphopantetheine + H(+). In terms of biological role, converts holo-ACP to apo-ACP by hydrolytic cleavage of the phosphopantetheine prosthetic group from ACP. This Escherichia coli O7:K1 (strain IAI39 / ExPEC) protein is Acyl carrier protein phosphodiesterase.